The following is a 345-amino-acid chain: Phosphate acyltransferase (345 aa).

It belongs to the PlsX family. In terms of assembly, homodimer. Probably interacts with PlsY.

It is found in the cytoplasm. The enzyme catalyses a fatty acyl-[ACP] + phosphate = an acyl phosphate + holo-[ACP]. The protein operates within lipid metabolism; phospholipid metabolism. Functionally, catalyzes the reversible formation of acyl-phosphate (acyl-PO(4)) from acyl-[acyl-carrier-protein] (acyl-ACP). This enzyme utilizes acyl-ACP as fatty acyl donor, but not acyl-CoA. This is Phosphate acyltransferase from Thermodesulfovibrio yellowstonii (strain ATCC 51303 / DSM 11347 / YP87).